We begin with the raw amino-acid sequence, 213 residues long: Probable aspartate aminotransferase (213 aa).

The L-aspartate site is built by glycine 47, tryptophan 133, and asparagine 183.

It belongs to the class-I pyridoxal-phosphate-dependent aminotransferase family. In terms of assembly, homodimer. Requires pyridoxal 5'-phosphate as cofactor.

It localises to the cytoplasm. The catalysed reaction is L-aspartate + 2-oxoglutarate = oxaloacetate + L-glutamate. This Streptomyces griseus protein is Probable aspartate aminotransferase (aspC).